Reading from the N-terminus, the 1138-residue chain is Lysylphosphatidylglycerol biosynthesis bifunctional protein LysX (1138 aa).

Polar residues predominate over residues 1–15; sequence MALDTPSSDLPVSTD. A disordered region spans residues 1-34; the sequence is MALDTPSSDLPVSTDDTAEHQPTPAHRPPSAADR. The tract at residues 1–646 is phosphatidylglycerol lysyltransferase; sequence MALDTPSSDL…LIAQLESEED (646 aa). Helical transmembrane passes span 56-76, 92-112, 119-139, 155-175, 190-210, and 247-267; these read IAGT…IFPL, IVSL…VAIA, IAWW…ALLL, IQIW…IVTY, ALGV…GLVW, and IVID…AATV. The segment at 647–1138 is lysine--tRNA ligase; that stretch reads RTAVEVHRPE…AFPMVKPTDA (492 aa). A DNA-binding region (OB) is located at residues 698–772; the sequence is VTIAGRVTKM…GELSVLIDAW (75 aa). Mg(2+)-binding residues include D1048 and E1055.

The protein in the N-terminal section; belongs to the LPG synthetase family. In the C-terminal section; belongs to the class-II aminoacyl-tRNA synthetase family. It depends on Mg(2+) as a cofactor.

It localises to the cell membrane. It carries out the reaction tRNA(Lys) + L-lysine + ATP = L-lysyl-tRNA(Lys) + AMP + diphosphate. It catalyses the reaction L-lysyl-tRNA(Lys) + a 1,2-diacyl-sn-glycero-3-phospho-(1'-sn-glycerol) = a 1,2-diacyl-sn-glycero-3-phospho-1'-(3'-O-L-lysyl)-sn-glycerol + tRNA(Lys). Catalyzes the production of L-lysyl-tRNA(Lys)transfer and the transfer of a lysyl group from L-lysyl-tRNA(Lys) to membrane-bound phosphatidylglycerol (PG), which produces lysylphosphatidylglycerol (LPG), one of the components of the bacterial membrane with a positive net charge. LPG synthesis contributes to the resistance to cationic antimicrobial peptides (CAMPs) and likely protects M.tuberculosis against the CAMPs produced by competiting microorganisms (bacteriocins). In fact, the modification of anionic phosphatidylglycerol with positively charged L-lysine results in repulsion of the peptides. The sequence is that of Lysylphosphatidylglycerol biosynthesis bifunctional protein LysX (lysX) from Gordonia bronchialis (strain ATCC 25592 / DSM 43247 / BCRC 13721 / JCM 3198 / KCTC 3076 / NBRC 16047 / NCTC 10667) (Rhodococcus bronchialis).